We begin with the raw amino-acid sequence, 220 residues long: Putative amino-acid transporter YisU (220 aa).

6 helical membrane-spanning segments follow: residues 15–35 (FFSM…ILPL), 67–87 (TLLI…LPVF), 89–109 (TVMM…TWNI), 128–148 (AFAA…IGVI), 161–181 (WLFM…LAIA), and 195–215 (MLIV…YFGV).

The protein belongs to the LysE/ArgO transporter (TC 2.A.75) family.

Its subcellular location is the cell membrane. The chain is Putative amino-acid transporter YisU (yisU) from Bacillus subtilis (strain 168).